Reading from the N-terminus, the 372-residue chain is 4-hydroxy-3-methylbut-2-en-1-yl diphosphate synthase (flavodoxin) (372 aa).

[4Fe-4S] cluster is bound by residues Cys-270, Cys-273, Cys-305, and Glu-312.

It belongs to the IspG family. [4Fe-4S] cluster is required as a cofactor.

It catalyses the reaction (2E)-4-hydroxy-3-methylbut-2-enyl diphosphate + oxidized [flavodoxin] + H2O + 2 H(+) = 2-C-methyl-D-erythritol 2,4-cyclic diphosphate + reduced [flavodoxin]. The protein operates within isoprenoid biosynthesis; isopentenyl diphosphate biosynthesis via DXP pathway; isopentenyl diphosphate from 1-deoxy-D-xylulose 5-phosphate: step 5/6. Functionally, converts 2C-methyl-D-erythritol 2,4-cyclodiphosphate (ME-2,4cPP) into 1-hydroxy-2-methyl-2-(E)-butenyl 4-diphosphate. This is 4-hydroxy-3-methylbut-2-en-1-yl diphosphate synthase (flavodoxin) from Aliivibrio salmonicida (strain LFI1238) (Vibrio salmonicida (strain LFI1238)).